Here is a 170-residue protein sequence, read N- to C-terminus: FMRFamide-like neuropeptides 6 (170 aa).

A signal peptide spans 1–19; the sequence is MNSRGLILTLGVVIAVAFA. A Pyrrolidone carboxylic acid modification is found at Gln20. Phe39 carries the post-translational modification Phenylalanine amide. Positions 42-51 are excised as a propeptide; sequence SDGGNPMEME. The residue at position 60 (Phe60) is a Phenylalanine amide. Residues 63–81 constitute a propeptide that is removed on maturation; it reads RSSGGDEQELVGGDDIDME. Phenylalanine amide is present on Phe90. Residues 93-104 constitute a propeptide that is removed on maturation; sequence RSGPQEDDMPME. Phe113 carries the phenylalanine amide modification. Residues 116–136 constitute a propeptide that is removed on maturation; sequence RSSDMEVIGNEGVDGDAHDLF. The residue at position 145 (Phe145) is a Phenylalanine amide. A propeptide spanning residues 148–159 is cleaved from the precursor; the sequence is RSMGEEEDHDMM. The disordered stretch occupies residues 150 to 170; sequence MGEEEDHDMMKRKSAYMRFGR. The segment covering 159 to 170 has biased composition (basic residues); that stretch reads MKRKSAYMRFGR. Phe168 carries the phenylalanine amide modification.

This sequence belongs to the FARP (FMRFamide related peptide) family. Each flp gene is expressed in a distinct set of neurons. Flp-6 is expressed in the ASE sensory neurons, AFD, ASG, PVT and I1 neurons.

The protein localises to the secreted. In terms of biological role, FMRFamides and FMRFamide-like peptides are neuropeptides. KSAYMRF-amide has an excitatory effect on dissected pharyngeal myogenic muscle system. This Caenorhabditis elegans protein is FMRFamide-like neuropeptides 6.